Here is a 35-residue protein sequence, read N- to C-terminus: Cytochrome b6-f complex subunit 7 (35 aa).

A helical transmembrane segment spans residues 9-27 (AGLSIVLTLVGVALGYGIL).

Belongs to the PetM family. As to quaternary structure, the 4 large subunits of the cytochrome b6-f complex are cytochrome b6, subunit IV (17 kDa polypeptide, PetD), cytochrome f and the Rieske protein, while the 4 small subunits are PetG, PetL, PetM and PetN. The complex functions as a dimer.

The protein resides in the cellular thylakoid membrane. In terms of biological role, component of the cytochrome b6-f complex, which mediates electron transfer between photosystem II (PSII) and photosystem I (PSI), cyclic electron flow around PSI, and state transitions. In Synechococcus sp. (strain JA-3-3Ab) (Cyanobacteria bacterium Yellowstone A-Prime), this protein is Cytochrome b6-f complex subunit 7.